The sequence spans 198 residues: Nucleoid occlusion factor SlmA (198 aa).

The 62-residue stretch at 9–70 (RNRREEILQA…SLIEFIEDSL (62 aa)) folds into the HTH tetR-type domain. Residues 33-52 (TTAKLAANVGVSEAALYRHF) constitute a DNA-binding region (H-T-H motif). Residues 117–144 (EQDRLQGRINQLFERIEAQLRQVLKERK) are a coiled coil.

This sequence belongs to the nucleoid occlusion factor SlmA family. As to quaternary structure, homodimer. Interacts with FtsZ.

It is found in the cytoplasm. The protein localises to the nucleoid. In terms of biological role, required for nucleoid occlusion (NO) phenomenon, which prevents Z-ring formation and cell division over the nucleoid. Acts as a DNA-associated cell division inhibitor that binds simultaneously chromosomal DNA and FtsZ, and disrupts the assembly of FtsZ polymers. SlmA-DNA-binding sequences (SBS) are dispersed on non-Ter regions of the chromosome, preventing FtsZ polymerization at these regions. The polypeptide is Nucleoid occlusion factor SlmA (Serratia proteamaculans (strain 568)).